The following is a 185-amino-acid chain: HTH-type transcriptional regulator Hpr (185 aa).

An HTH marR-type domain is found at 13–157 (AMIFSQRIAQ…LIAILRNIYG (145 aa)). Positions 63–86 (ISEIAKFGVMHVSTAFNFSKKLEE) form a DNA-binding region, H-T-H motif.

As to quaternary structure, homodimer.

Functionally, negative regulator of protease production and sporulation. The sequence is that of HTH-type transcriptional regulator Hpr from Bacillus cereus (strain G9842).